The chain runs to 197 residues: Recombination protein RecR (197 aa).

Residues 56–71 (CHVCGNYCESDTCNIC) form a C4-type zinc finger. The region spanning 79–174 (RIICVVEESK…KITKLASGIP (96 aa)) is the Toprim domain.

It belongs to the RecR family.

May play a role in DNA repair. It seems to be involved in an RecBC-independent recombinational process of DNA repair. It may act with RecF and RecO. In Fusobacterium nucleatum subsp. nucleatum (strain ATCC 25586 / DSM 15643 / BCRC 10681 / CIP 101130 / JCM 8532 / KCTC 2640 / LMG 13131 / VPI 4355), this protein is Recombination protein RecR.